Consider the following 402-residue polypeptide: Protein HAIKU1 (402 aa).

Disordered stretches follow at residues 1–44, 63–135, 160–266, and 346–402; these read MDRP…LQTQ, TGSP…QQPM, SSLG…LVPS, and QPLT…WNDY. A compositionally biased stretch (polar residues) spans 24 to 44; that stretch reads LHQSTFAASTSNGAAPRLQTQ. A VQ motif is present at residues 55–64; sequence FRSIVQQLTG. A compositionally biased stretch (polar residues) spans 76–87; the sequence is QNNSLRPQNTRL. Over residues 103–113 the composition is skewed to pro residues; sequence VPLPSMAPPQS. A compositionally biased stretch (polar residues) spans 160–173; it reads SSLGDSGPNANQMQ. Low complexity predominate over residues 218-240; sequence MPAQSQSQSQPQPQPQPQQHMMP. The span at 257 to 266 shows a compositional bias: pro residues; sequence YLPPPGLVPS. Residues 349 to 358 are compositionally biased toward polar residues; that stretch reads TPNFSFSQIA. Positions 371–380 are enriched in pro residues; it reads QGPPQPPPSP. Low complexity predominate over residues 381 to 390; the sequence is GLMFPLSPSG.

In terms of assembly, interacts with WRKY10. Interacts with MPK6.

Its subcellular location is the nucleus. Functionally, modulates seed size by negatively regulating the cellularization of syncytial endosperm. May function by binding and modulating the activity of WRKY10 transcription factor. In Arabidopsis thaliana (Mouse-ear cress), this protein is Protein HAIKU1.